A 405-amino-acid chain; its full sequence is G1/S-specific cyclin-D (405 aa).

The Cyclin N-terminal domain maps to 76 to 200; the sequence is FYNCMEYEEA…LIVTTLQWET (125 aa). Residues 301-405 are disordered; it reads YTSEDAEKTE…STPPKIFKTL (105 aa). The segment covering 311 to 321 has biased composition (polar residues); the sequence is PTPSAPASTQE. Basic and acidic residues predominate over residues 326–335; the sequence is QELKELKEEP. The segment covering 358–380 has biased composition (polar residues); sequence SEQTPSTPLNDSGFSSDVSSPAS.

It belongs to the cyclin family. Cyclin D subfamily. In terms of assembly, interacts with cdk-4; the interaction is likely involved in regulating cdk-4 activity.

In terms of biological role, in association with cdk-4, regulates the progression through the G1 phase of the cell cycle during postembryonic development. Regulates proliferation of the coelomocyte lineage and intestinal cells during late embryogenesis. In complex with cdk-4, involved in sex determination during gonadogenesis by regulating the asymmetric division of the somatic gonadal precursor cell (SGP). In Caenorhabditis elegans, this protein is G1/S-specific cyclin-D.